The following is a 508-amino-acid chain: tRNA-2-methylthio-N(6)-dimethylallyladenosine synthase (508 aa).

The interval 1–21 is disordered; that stretch reads MNEEQRKASGQVSSSDKKSEK. One can recognise an MTTase N-terminal domain in the interval 65–183; it reads RKFYIRTYGC…LPELLSECYL (119 aa). Residues Cys74, Cys110, Cys144, Cys220, Cys224, and Cys227 each contribute to the [4Fe-4S] cluster site. One can recognise a Radical SAM core domain in the interval 206-436; the sequence is RQGKIKGWVN…NALVNEISAK (231 aa). The region spanning 439–502 is the TRAM domain; the sequence is KEYEGQTVEV…TWSLDGEMVG (64 aa).

This sequence belongs to the methylthiotransferase family. MiaB subfamily. As to quaternary structure, monomer. [4Fe-4S] cluster serves as cofactor.

It is found in the cytoplasm. The enzyme catalyses N(6)-dimethylallyladenosine(37) in tRNA + (sulfur carrier)-SH + AH2 + 2 S-adenosyl-L-methionine = 2-methylsulfanyl-N(6)-dimethylallyladenosine(37) in tRNA + (sulfur carrier)-H + 5'-deoxyadenosine + L-methionine + A + S-adenosyl-L-homocysteine + 2 H(+). Functionally, catalyzes the methylthiolation of N6-(dimethylallyl)adenosine (i(6)A), leading to the formation of 2-methylthio-N6-(dimethylallyl)adenosine (ms(2)i(6)A) at position 37 in tRNAs that read codons beginning with uridine. The polypeptide is tRNA-2-methylthio-N(6)-dimethylallyladenosine synthase (Bacillus pumilus (strain SAFR-032)).